A 526-amino-acid polypeptide reads, in one-letter code: Tyrosine-protein kinase transforming protein Src (526 aa).

Positions M1–G52 are disordered. G2 carries N-myristoyl glycine; by host lipidation. Over residues K7–H25 the composition is skewed to basic and acidic residues. The SH3 domain occupies G81–S142. In terms of domain architecture, SH2 spans W148 to C245. The 251-residue stretch at L267–L517 folds into the Protein kinase domain. ATP contacts are provided by residues L273–V281 and K295. D386 functions as the Proton acceptor in the catalytic mechanism. Y416 is subject to Phosphotyrosine; by autocatalysis.

Belongs to the protein kinase superfamily. Tyr protein kinase family. SRC subfamily. It depends on Mn(2+) as a cofactor. Post-translationally, the phosphorylated form is termed pp60v-src.

The catalysed reaction is L-tyrosyl-[protein] + ATP = O-phospho-L-tyrosyl-[protein] + ADP + H(+). This phosphoprotein, required for both the initiation and the maintenance of neoplastic transformation, is a protein kinase that catalyzes the phosphorylation of tyrosine residues in vitro. This chain is Tyrosine-protein kinase transforming protein Src (V-SRC), found in Gallus gallus (Chicken).